A 581-amino-acid polypeptide reads, in one-letter code: Pentatricopeptide repeat-containing protein At3g56550 (581 aa).

9 PPR repeats span residues 70 to 104 (STSDWNYLIRGFSNSSSPLNSILFYNRMLLSSVSR), 106 to 140 (DLFTFNFALKSCERIKSIPKCLEIHGSVIRSGFLD), 141 to 171 (DAIVATSLVRCYSANGSVEIASKVFDEMPVR), 172 to 206 (DLVSWNVMICCFSHVGLHNQALSMYKRMGNEGVCG), 207 to 241 (DSYTLVALLSSCAHVSALNMGVMLHRIACDIRCES), 242 to 272 (CVFVSNALIDMYAKCGSLENAIGVFNGMRKR), 273 to 307 (DVLTWNSMIIGYGVHGHGVEAISFFRKMVASGVRP), 308 to 338 (NAITFLGLLLGCSHQGLVKEGVEHFEIMSSQ), and 344 to 378 (NVKHYGCMVDLYGRAGQLENSLEMIYASSCHEDPV). Residues 379 to 454 (LWRTLLGSCK…VPGWSWIEIG (76 aa)) are type E motif. The type E(+) motif stretch occupies residues 455-485 (DQVHKFVVDDKMHPESAVIYSELGEVINRAI). The segment at 486–581 (LAGYKPEDSN…DGICSCNDYW (96 aa)) is type DYW motif.

Belongs to the PPR family. PCMP-H subfamily.

This chain is Pentatricopeptide repeat-containing protein At3g56550 (PCMP-H80), found in Arabidopsis thaliana (Mouse-ear cress).